A 97-amino-acid polypeptide reads, in one-letter code: Large ribosomal subunit protein uL23 (97 aa).

The protein belongs to the universal ribosomal protein uL23 family. In terms of assembly, part of the 50S ribosomal subunit. Contacts protein L29, and trigger factor when it is bound to the ribosome.

In terms of biological role, one of the early assembly proteins it binds 23S rRNA. One of the proteins that surrounds the polypeptide exit tunnel on the outside of the ribosome. Forms the main docking site for trigger factor binding to the ribosome. The protein is Large ribosomal subunit protein uL23 of Agrobacterium fabrum (strain C58 / ATCC 33970) (Agrobacterium tumefaciens (strain C58)).